The primary structure comprises 202 residues: Small ribosomal subunit protein uS4 (202 aa).

In terms of domain architecture, S4 RNA-binding spans 93 to 156 (RRLDNMVYRL…KDLKIISEAV (64 aa)).

The protein belongs to the universal ribosomal protein uS4 family. Part of the 30S ribosomal subunit. Contacts protein S5. The interaction surface between S4 and S5 is involved in control of translational fidelity.

Its function is as follows. One of the primary rRNA binding proteins, it binds directly to 16S rRNA where it nucleates assembly of the body of the 30S subunit. Functionally, with S5 and S12 plays an important role in translational accuracy. The chain is Small ribosomal subunit protein uS4 from Pediococcus pentosaceus (strain ATCC 25745 / CCUG 21536 / LMG 10740 / 183-1w).